The primary structure comprises 381 residues: Spermidine/putrescine import ATP-binding protein PotA (381 aa).

In terms of domain architecture, ABC transporter spans 19–249 (VELRKVFKVF…PESPFVADFI (231 aa)). 51-58 (GPSGCGKT) lines the ATP pocket.

Belongs to the ABC transporter superfamily. Spermidine/putrescine importer (TC 3.A.1.11.1) family. In terms of assembly, the complex is composed of two ATP-binding proteins (PotA), two transmembrane proteins (PotB and PotC) and a solute-binding protein (PotD).

Its subcellular location is the cell inner membrane. It carries out the reaction ATP + H2O + polyamine-[polyamine-binding protein]Side 1 = ADP + phosphate + polyamineSide 2 + [polyamine-binding protein]Side 1.. Part of the ABC transporter complex PotABCD involved in spermidine/putrescine import. Responsible for energy coupling to the transport system. This chain is Spermidine/putrescine import ATP-binding protein PotA, found in Trichodesmium erythraeum (strain IMS101).